The following is a 744-amino-acid chain: Potassium-transporting ATPase ATP-binding subunit (744 aa).

4 helical membrane passes run 80–100 (PVMFVVYIGSILTTLLWVMAL), 108–128 (AGFILAVSVWLWFTVLFANVA), 265–285 (LALTILLVSLTIILLLATVTL), and 310–330 (VLVALLVCLIPTTIGGLLSAI). Residue D363 is the 4-aspartylphosphate intermediate of the active site. Residues D400, E404, 435–442 (FSAQTRMS), and K457 each bind ATP. Mg(2+)-binding residues include D580 and D584. A run of 3 helical transmembrane segments spans residues 650 to 670 (FAIIPAAFATTYPQLAALNVM), 678 to 698 (AVMSAVIFNALIIVFLIPLAL), and 724 to 744 (LLLPFPGIKLIDMFLAAMGWV).

Belongs to the cation transport ATPase (P-type) (TC 3.A.3) family. Type IA subfamily. In terms of assembly, the system is composed of three essential subunits: KdpA, KdpB and KdpC.

It localises to the cell inner membrane. It carries out the reaction K(+)(out) + ATP + H2O = K(+)(in) + ADP + phosphate + H(+). In terms of biological role, part of the high-affinity ATP-driven potassium transport (or Kdp) system, which catalyzes the hydrolysis of ATP coupled with the electrogenic transport of potassium into the cytoplasm. This subunit is responsible for energy coupling to the transport system and for the release of the potassium ions to the cytoplasm. In Ralstonia nicotianae (strain ATCC BAA-1114 / GMI1000) (Ralstonia solanacearum), this protein is Potassium-transporting ATPase ATP-binding subunit.